The chain runs to 182 residues: Ribosome-recycling factor (182 aa).

The protein belongs to the RRF family.

Its subcellular location is the cytoplasm. In terms of biological role, responsible for the release of ribosomes from messenger RNA at the termination of protein biosynthesis. May increase the efficiency of translation by recycling ribosomes from one round of translation to another. The sequence is that of Ribosome-recycling factor from Nostoc sp. (strain PCC 7120 / SAG 25.82 / UTEX 2576).